The primary structure comprises 75 residues: UPF0057 membrane protein At2g24040 (75 aa).

The next 2 helical transmembrane spans lie at S4–L24 and F33–Y53.

This sequence belongs to the UPF0057 (PMP3) family.

It is found in the membrane. This chain is UPF0057 membrane protein At2g24040, found in Arabidopsis thaliana (Mouse-ear cress).